Reading from the N-terminus, the 241-residue chain is Probable septum site-determining protein MinC (241 aa).

The tract at residues 109–135 (PSGARERKVDPSSKTPAKPAEPTYRPT) is disordered.

The protein belongs to the MinC family. Interacts with MinD and FtsZ.

Its function is as follows. Cell division inhibitor that blocks the formation of polar Z ring septums. Rapidly oscillates between the poles of the cell to destabilize FtsZ filaments that have formed before they mature into polar Z rings. Prevents FtsZ polymerization. This is Probable septum site-determining protein MinC from Stutzerimonas stutzeri (strain A1501) (Pseudomonas stutzeri).